The following is a 665-amino-acid chain: MALLKVAPSRLLSRALQLTSTLQNCTATSIAARRNFHFTVYGRKDTSAKVSDSISTQYPVVDHDFDAVVVGAGGAGLRAAFGLSEAGFNTACITKLFPTRSHTVAAQGGINAALGNMEDDDWRWHFYDTVKGSDWLGDQDAIHYMTEQAPASVIELENYGMPFSRTEQGKIYQRAFGGQSLKYGKGGQAHRCCCVADRTGHSLLHTLYGRSLRYDTSYFVEYFALDLLMENGECRGVIALCMEDGSIHRFRAKNTVIATGGYGRTYFSCTSAHTCTGDGTAMVTRAGLPCQDLEFVQFHPTGIYGAGCLITEGCRGEGGILINSEGERFMERYAPVAKDLASRDVVSRSMTIEMREGRGCGKDKDHVYLQLHHLPPSQLASRLPGISETAMIFAGVDVTKEPIPVLPTVHYNMGGIPTNYKGQVITHVNGEDRVVPGLYACGEAASASVHGANRLGANSLLDLVVFGRACALSIAEECKPGEALPSIKENAGEESVANLDKLRFANGSTRTSELRLNMQKTMQTHAAVFRTGSVLKEGCEKLSVINSAMDDLKTFDRGIVWNTDVVETLELQNLMLCALQTINSAEARKESRGAHAREDYKTRIDEYDYSKPIQGQQKKSFSEHWRKHTLSYVDSKGKVSLEYRPVIDATLNEDCASVPPAIRSY.

The transit peptide at 1–45 (MALLKVAPSRLLSRALQLTSTLQNCTATSIAARRNFHFTVYGRKD) directs the protein to the mitochondrion. Ala-72, Ala-75, Thr-94, Lys-95, and Ser-101 together coordinate FAD. His-102 is subject to Tele-8alpha-FAD histidine. Thr-103, Gly-108, Ala-224, and Asp-278 together coordinate FAD. His-299, Arg-343, and His-410 together coordinate oxaloacetate. Arg-343 serves as the catalytic Proton acceptor. Glu-443 is an FAD binding site. Arg-454 and Ala-457 together coordinate oxaloacetate. Ser-459 and Leu-460 together coordinate FAD.

It belongs to the FAD-dependent oxidoreductase 2 family. FRD/SDH subfamily. As to quaternary structure, component of complex II composed of four subunits: a flavoprotein (FP), an iron-sulfur protein (IP), and a cytochrome b composed of a large and a small subunit. FAD is required as a cofactor.

Its subcellular location is the mitochondrion inner membrane. The enzyme catalyses a ubiquinone + succinate = a ubiquinol + fumarate. The catalysed reaction is (R)-malate + a quinone = enol-oxaloacetate + a quinol. It catalyses the reaction (S)-malate + a quinone = enol-oxaloacetate + a quinol. Its pathway is carbohydrate metabolism; tricarboxylic acid cycle; fumarate from succinate (eukaryal route): step 1/1. Its activity is regulated as follows. Enol-oxaloacetate inhibits the succinate dehydrogenase activity. In terms of biological role, flavoprotein (FP) subunit of succinate dehydrogenase (SDH) that is involved in complex II of the mitochondrial electron transport chain and is responsible for transferring electrons from succinate to ubiquinone (coenzyme Q). SDH also oxidizes malate to the non-canonical enol form of oxaloacetate, enol-oxaloacetate. Enol-oxaloacetate, which is a potent inhibitor of the succinate dehydrogenase activity, is further isomerized into keto-oxaloacetate. The sequence is that of Succinate dehydrogenase [ubiquinone] flavoprotein subunit B, mitochondrial (sdha-b) from Xenopus laevis (African clawed frog).